Reading from the N-terminus, the 278-residue chain is S-formylglutathione hydrolase YeiG (278 aa).

Catalysis depends on charge relay system residues Ser-145, Asp-223, and His-256.

This sequence belongs to the esterase D family.

The enzyme catalyses S-formylglutathione + H2O = formate + glutathione + H(+). Functionally, serine hydrolase involved in the detoxification of formaldehyde. Hydrolyzes S-formylglutathione to glutathione and formate. This is S-formylglutathione hydrolase YeiG (yeiG) from Shigella dysenteriae serotype 1 (strain Sd197).